A 587-amino-acid chain; its full sequence is Potassium-transporting ATPase potassium-binding subunit (587 aa).

The next 4 membrane-spanning stretches (helical) occupy residues 1-21 (MSTS…LWVT), 60-80 (PVYA…LYLL), 89-109 (LNLG…VSFM), and 131-151 (GLAV…IAVV). The interval 162 to 188 (AVGGPGGPNGPGGPGGPNGPGAGSRDD) is disordered. The span at 164–183 (GGPGGPNGPGGPGGPNGPGA) shows a compositional bias: gly residues. 7 helical membrane-spanning segments follow: residues 208–228 (IRIL…GGAI), 280–300 (PTSW…FSLP), 314–334 (LAIV…NAAF), 409–429 (GLYG…LMIG), 449–469 (LYFL…MGLP), 514–534 (ALGL…LGMA), and 557–577 (FAGM…FPAL).

The protein belongs to the KdpA family. As to quaternary structure, the system is composed of three essential subunits: KdpA, KdpB and KdpC.

The protein resides in the cell membrane. In terms of biological role, part of the high-affinity ATP-driven potassium transport (or Kdp) system, which catalyzes the hydrolysis of ATP coupled with the electrogenic transport of potassium into the cytoplasm. This subunit binds the extracellular potassium ions and delivers the ions to the membrane domain of KdpB through an intramembrane tunnel. In Frankia alni (strain DSM 45986 / CECT 9034 / ACN14a), this protein is Potassium-transporting ATPase potassium-binding subunit.